The following is a 381-amino-acid chain: Succinyl-diaminopimelate desuccinylase (381 aa).

Zn(2+) is bound at residue H69. Residue D71 is part of the active site. A Zn(2+)-binding site is contributed by D103. Catalysis depends on E137, which acts as the Proton acceptor. 3 residues coordinate Zn(2+): E138, E166, and H355.

It belongs to the peptidase M20A family. DapE subfamily. In terms of assembly, homodimer. Zn(2+) is required as a cofactor. Co(2+) serves as cofactor.

The catalysed reaction is N-succinyl-(2S,6S)-2,6-diaminopimelate + H2O = (2S,6S)-2,6-diaminopimelate + succinate. It functions in the pathway amino-acid biosynthesis; L-lysine biosynthesis via DAP pathway; LL-2,6-diaminopimelate from (S)-tetrahydrodipicolinate (succinylase route): step 3/3. Catalyzes the hydrolysis of N-succinyl-L,L-diaminopimelic acid (SDAP), forming succinate and LL-2,6-diaminopimelate (DAP), an intermediate involved in the bacterial biosynthesis of lysine and meso-diaminopimelic acid, an essential component of bacterial cell walls. The sequence is that of Succinyl-diaminopimelate desuccinylase from Rickettsia africae (strain ESF-5).